A 241-amino-acid chain; its full sequence is uncharacterized protein (241 aa).

3 disordered regions span residues 19 to 59 (ERDR…QQLG), 101 to 139 (VRRP…ASRS), and 152 to 182 (RGCR…KPCS). Positions 34-48 (ARGGRGLWTVGGGGS) are enriched in gly residues. The segment covering 49–58 (PTETAESQQL) has biased composition (polar residues). A compositionally biased stretch (pro residues) spans 106 to 118 (PSVPSPLPKPPVP).

This is an uncharacterized protein from Homo sapiens (Human).